A 116-amino-acid chain; its full sequence is Flagellar transcriptional regulator FlhD (116 aa).

This sequence belongs to the FlhD family. Homodimer; disulfide-linked. Forms a heterohexamer composed of two FlhC and four FlhD subunits. Each FlhC binds a FlhD dimer, forming a heterotrimer, and a hexamer assembles by dimerization of two heterotrimers.

Its subcellular location is the cytoplasm. Functions in complex with FlhC as a master transcriptional regulator that regulates transcription of several flagellar and non-flagellar operons by binding to their promoter region. Activates expression of class 2 flagellar genes, including fliA, which is a flagellum-specific sigma factor that turns on the class 3 genes. Also regulates genes whose products function in a variety of physiological pathways. The chain is Flagellar transcriptional regulator FlhD from Xenorhabdus nematophila (Achromobacter nematophilus).